The chain runs to 188 residues: Elongation factor P (188 aa).

Lys34 carries the post-translational modification N6-(3,6-diaminohexanoyl)-5-hydroxylysine.

The protein belongs to the elongation factor P family. In terms of processing, may be beta-lysylated on the epsilon-amino group of Lys-34 by the combined action of EpmA and EpmB, and then hydroxylated on the C5 position of the same residue by EpmC (if this protein is present). Lysylation is critical for the stimulatory effect of EF-P on peptide-bond formation. The lysylation moiety may extend toward the peptidyltransferase center and stabilize the terminal 3-CCA end of the tRNA. Hydroxylation of the C5 position on Lys-34 may allow additional potential stabilizing hydrogen-bond interactions with the P-tRNA.

It localises to the cytoplasm. The protein operates within protein biosynthesis; polypeptide chain elongation. Functionally, involved in peptide bond synthesis. Alleviates ribosome stalling that occurs when 3 or more consecutive Pro residues or the sequence PPG is present in a protein, possibly by augmenting the peptidyl transferase activity of the ribosome. Modification of Lys-34 is required for alleviation. The polypeptide is Elongation factor P (Erwinia tasmaniensis (strain DSM 17950 / CFBP 7177 / CIP 109463 / NCPPB 4357 / Et1/99)).